Here is a 223-residue protein sequence, read N- to C-terminus: Cuticular glutathione peroxidase (223 aa).

Residues 1-19 (MSAQLLILSHMVLLQLIVA) form the signal peptide. N39 carries an N-linked (GlcNAc...) asparagine glycan. The active site involves C74. N-linked (GlcNAc...) asparagine glycosylation is present at N92.

It belongs to the glutathione peroxidase family. Homotetramer.

It is found in the secreted. It catalyses the reaction 2 glutathione + H2O2 = glutathione disulfide + 2 H2O. Could inhibit the oxidative burst of leukocytes and neutralize the secondary products of lipid peroxidation, thus providing the resistance of these parasites to immune effector mechanisms and their persistence in the mammalian host. It may also be involved in the formation of cross-linking residues such as dityrosine, trityrosine and isotrityrosine identified in cuticular collagen. Highly cross-linked external cortex may also serve to protect the parasite from immune attack. This is Cuticular glutathione peroxidase from Brugia malayi (Filarial nematode worm).